The sequence spans 51 residues: Large ribosomal subunit protein eL39 (51 aa).

It belongs to the eukaryotic ribosomal protein eL39 family.

The polypeptide is Large ribosomal subunit protein eL39 (Methanobrevibacter smithii (strain ATCC 35061 / DSM 861 / OCM 144 / PS)).